A 260-amino-acid chain; its full sequence is ARL14 effector protein (260 aa).

M1 carries the N-acetylmethionine modification. K177 participates in a covalent cross-link: Glycyl lysine isopeptide (Lys-Gly) (interchain with G-Cter in SUMO2). S183 carries the post-translational modification Phosphoserine.

In terms of assembly, interacts with ARL14 and MYO1E.

The protein localises to the cytoplasm. Through its interaction with ARL14 and MYO1E, may connect MHC class II-containing cytoplasmic vesicles to the actin network and hence controls the movement of these vesicles along the actin cytoskeleton in dendritic cells. The protein is ARL14 effector protein (ARL14EP) of Bos taurus (Bovine).